We begin with the raw amino-acid sequence, 627 residues long: uncharacterized protein (627 aa).

Disordered regions lie at residues 57–82, 96–121, 160–184, 198–232, 247–277, 335–358, and 449–579; these read EDAM…QGED, PEAQ…APPG, GCSH…DAAY, AQSQ…CPSG, SHDA…RGAP, RQAG…EAAY, and VFDV…PPLS. Positions 169-183 are enriched in low complexity; sequence SSSDQAADAPAGDAA. The span at 336-357 shows a compositional bias: low complexity; sequence QAGAEPAQAPATAPAPEGTEAA. Residues 450–464 are compositionally biased toward basic and acidic residues; the sequence is FDVKEQGAHADRDAA.

This is an uncharacterized protein from Treponema pallidum (strain Nichols).